The sequence spans 495 residues: Glycerol kinase (495 aa).

Residue Thr11 coordinates ADP. ATP is bound by residues Thr11, Thr12, and Ser13. Sn-glycerol 3-phosphate is bound at residue Thr11. Arg15 serves as a coordination point for ADP. Sn-glycerol 3-phosphate is bound by residues Arg81, Glu82, Tyr133, and Asp242. Glycerol-binding residues include Arg81, Glu82, Tyr133, Asp242, and Gln243. The ADP site is built by Thr264 and Gly307. Residues Thr264, Gly307, Gln311, and Gly408 each contribute to the ATP site. Residues Gly408 and Asn412 each contribute to the ADP site.

It belongs to the FGGY kinase family.

It carries out the reaction glycerol + ATP = sn-glycerol 3-phosphate + ADP + H(+). It participates in polyol metabolism; glycerol degradation via glycerol kinase pathway; sn-glycerol 3-phosphate from glycerol: step 1/1. Its activity is regulated as follows. Inhibited by fructose 1,6-bisphosphate (FBP). In terms of biological role, key enzyme in the regulation of glycerol uptake and metabolism. Catalyzes the phosphorylation of glycerol to yield sn-glycerol 3-phosphate. The polypeptide is Glycerol kinase (Rhodospirillum rubrum (strain ATCC 11170 / ATH 1.1.1 / DSM 467 / LMG 4362 / NCIMB 8255 / S1)).